A 222-amino-acid chain; its full sequence is Nudix hydrolase 11 (222 aa).

One can recognise a Nudix hydrolase domain in the interval A31–F175. Positions G73 to G96 match the Nudix box motif. Residues E90 and E94 each contribute to the Mg(2+) site. Residues F186 to Y204 form a helical membrane-spanning segment.

The protein belongs to the Nudix hydrolase family. PCD1 subfamily. It depends on Mn(2+) as a cofactor. Mg(2+) is required as a cofactor. Expressed in roots, stems and leaves.

It localises to the peroxisome membrane. In terms of biological role, coenzyme A diphosphatase which mediates the cleavage of CoA into 3',5'-ADP from CoA and 4'-phosphopantetheine. Can use malonyl-CoA, hexanoyl-CoA, lauroyl-CoA, myristoyl-CoA and palmitoyl-CoA as substrates, but not isobutyryl-CoA or propionyl-CoA. The sequence is that of Nudix hydrolase 11 (NUDT11) from Arabidopsis thaliana (Mouse-ear cress).